The chain runs to 282 residues: Bifunctional protein FolD (282 aa).

NADP(+) is bound by residues 165 to 167 (GAS) and isoleucine 231.

Belongs to the tetrahydrofolate dehydrogenase/cyclohydrolase family. Homodimer.

The enzyme catalyses (6R)-5,10-methylene-5,6,7,8-tetrahydrofolate + NADP(+) = (6R)-5,10-methenyltetrahydrofolate + NADPH. It catalyses the reaction (6R)-5,10-methenyltetrahydrofolate + H2O = (6R)-10-formyltetrahydrofolate + H(+). Its pathway is one-carbon metabolism; tetrahydrofolate interconversion. In terms of biological role, catalyzes the oxidation of 5,10-methylenetetrahydrofolate to 5,10-methenyltetrahydrofolate and then the hydrolysis of 5,10-methenyltetrahydrofolate to 10-formyltetrahydrofolate. The sequence is that of Bifunctional protein FolD from Francisella tularensis subsp. novicida (strain U112).